Here is a 424-residue protein sequence, read N- to C-terminus: Zinc metalloproteinase-disintegrin-like brevilysin H2a (424 aa).

Pyrrolidone carboxylic acid is present on Gln-1. The region spanning Arg-9–Pro-207 is the Peptidase M12B domain. Asn-69 carries an N-linked (GlcNAc...) asparagine glycan. Asp-96 contacts Ca(2+). 3 disulfide bridges follow: Cys-120–Cys-202, Cys-164–Cys-186, and Cys-166–Cys-169. Residue His-145 participates in Zn(2+) binding. Residue Glu-146 is part of the active site. Zn(2+)-binding residues include His-149 and His-155. N-linked (GlcNAc...) asparagine glycosylation is present at Asn-185. Positions 202, 205, 217, 220, 222, 224, 227, and 230 each coordinate Ca(2+). In terms of domain architecture, Disintegrin spans Pro-215 to Asn-301. Intrachain disulfides connect Cys-218-Cys-247, Cys-229-Cys-242, Cys-231-Cys-237, Cys-241-Cys-264, Cys-255-Cys-261, Cys-260-Cys-286, Cys-273-Cys-293, Cys-280-Cys-312, Cys-305-Cys-317, Cys-324-Cys-374, Cys-339-Cys-385, Cys-352-Cys-362, Cys-369-Cys-411, and Cys-405-Cys-417. Residues Asp-279–Asp-281 carry the D/ECD-tripeptide motif. Positions 281, 284, and 296 each coordinate Ca(2+). Asn-331 is a glycosylation site (N-linked (GlcNAc...) asparagine).

This sequence belongs to the venom metalloproteinase (M12B) family. P-III subfamily. P-IIIa sub-subfamily. Monomer. Requires Zn(2+) as cofactor. Glycosylated. As to expression, expressed by the venom gland.

It localises to the secreted. Its activity is regulated as follows. Its proteolytic activity is inhibited by EDTA, TPEN, 1,10-phenanthroline, and some thiol compounds, but is enhanced by alkaline earth metal ions (Mg2+, Ca2+, Sr2+, and Ba2+). Its activity is not modulated by urea (4 M). Functionally, non-hemorrhagic metalloproteinase that degrades fibrinogen. The alpha chain (FGA) is rapidly degraded, the beta chain (FGB) is degraded very slowly, while the gamma chain is left intact. Shows a prefential cleavage at X-Leu bonds. Cleaves insulin B chain at '29-His-|-Leu-30', '33-Ser-|-His-34', '38-Ala-|-Leu-39' and '40-Tyr-|-Leu-41' bonds. The sequence is that of Zinc metalloproteinase-disintegrin-like brevilysin H2a from Gloydius brevicauda (Korean slamosa snake).